Here is a 189-residue protein sequence, read N- to C-terminus: Elongation factor P (189 aa).

Residue K34 is modified to N6-(3,6-diaminohexanoyl)-5-hydroxylysine.

It belongs to the elongation factor P family. In terms of processing, may be beta-lysylated on the epsilon-amino group of Lys-34 by the combined action of EpmA and EpmB, and then hydroxylated on the C5 position of the same residue by EpmC (if this protein is present). Lysylation is critical for the stimulatory effect of EF-P on peptide-bond formation. The lysylation moiety may extend toward the peptidyltransferase center and stabilize the terminal 3-CCA end of the tRNA. Hydroxylation of the C5 position on Lys-34 may allow additional potential stabilizing hydrogen-bond interactions with the P-tRNA.

It localises to the cytoplasm. It functions in the pathway protein biosynthesis; polypeptide chain elongation. Its function is as follows. Involved in peptide bond synthesis. Alleviates ribosome stalling that occurs when 3 or more consecutive Pro residues or the sequence PPG is present in a protein, possibly by augmenting the peptidyl transferase activity of the ribosome. Modification of Lys-34 is required for alleviation. This is Elongation factor P from Saccharophagus degradans (strain 2-40 / ATCC 43961 / DSM 17024).